A 137-amino-acid chain; its full sequence is GEL complex subunit OPTI (137 aa).

The Cytoplasmic portion of the chain corresponds to 1 to 44 (MSGGRRKEEPPQPQLANGALKVSVWSKVLRSDAAWEDKDEFLDV). The chain crosses the membrane as a helical span at residues 45–65 (IYWFRQIIAVVLGVIWGVLPL). Arginine 66 is a topological domain (lumenal). Residues 67-84 (GFLGIAGFCLINAGVLYL) form a helical membrane-spanning segment. Residues 85–103 (YFSNYLQIDEEEYGGTWEL) are Cytoplasmic-facing. Residues 104-127 (TKEGFMTSFALFMVCVADSFTTGH) form a helical membrane-spanning segment. Over 128–137 (LDHLLHCHPL) the chain is Lumenal.

This sequence belongs to the EMC6 family. Component of the GET- and EMC-like (GEL) complex, composed of RAB5IF/OPTI and TMCO1. The GEL complex is part of the multi-pass translocon (MPT) complex, composed of three subcomplexes, the GEL complex (composed of RAB5IF/OPTI and TMCO1), the BOS complex (composed of NCLN/Nicalin, NOMO and TMEM147) and the PAT complex (composed of WDR83OS/Asterix and CCDC47). The MPT complex associates with the SEC61 complex. Interacts with NDUFS3, NDUFA4, NDUFV1, NDUFA9 and NDUFS8 of the mitochondrial membrane respiratory chain NADH dehydrogenase (Complex I). Interacts with UQCRC2 of the ubiquinol-cytochrome c reductase complex (Complex III). Interacts with COX5A and COX7C of the cytochrome c oxidase complex (Complex IV). In terms of tissue distribution, expressed in embryonic stem cells and differentiated neuronal cells.

The protein resides in the endoplasmic reticulum membrane. The protein localises to the mitochondrion inner membrane. Its function is as follows. Component of the multi-pass translocon (MPT) complex that mediates insertion of multi-pass membrane proteins into the lipid bilayer of membranes. The MPT complex takes over after the SEC61 complex: following membrane insertion of the first few transmembrane segments of proteins by the SEC61 complex, the MPT complex occludes the lateral gate of the SEC61 complex to promote insertion of subsequent transmembrane regions. Within the MPT complex, the GEL subcomplex may mediate insertion of transmembrane regions into the membrane. In addition to its role in multi-pass membrane insertion, RAB5IF/OPTI also acts as an assembly factor for mitochondrial respiratory complexes. The chain is GEL complex subunit OPTI from Homo sapiens (Human).